A 427-amino-acid polypeptide reads, in one-letter code: Adenylosuccinate synthetase (427 aa).

GTP contacts are provided by residues Gly12–Lys18 and Gly40–Thr42. The active-site Proton acceptor is Asp13. Mg(2+) contacts are provided by Asp13 and Gly40. IMP-binding positions include Asp13–Lys16, Asn38–His41, Thr128, Arg142, Gln223, Thr238, and Arg302. The active-site Proton donor is the His41. Thr298–Arg304 contributes to the substrate binding site. Residues Arg304, Lys330–Asp332, and Gly412–Gly414 each bind GTP.

It belongs to the adenylosuccinate synthetase family. In terms of assembly, homodimer. Mg(2+) is required as a cofactor.

The protein localises to the cytoplasm. It catalyses the reaction IMP + L-aspartate + GTP = N(6)-(1,2-dicarboxyethyl)-AMP + GDP + phosphate + 2 H(+). It functions in the pathway purine metabolism; AMP biosynthesis via de novo pathway; AMP from IMP: step 1/2. In terms of biological role, plays an important role in the de novo pathway of purine nucleotide biosynthesis. Catalyzes the first committed step in the biosynthesis of AMP from IMP. This chain is Adenylosuccinate synthetase, found in Thermobifida fusca (strain YX).